Consider the following 173-residue polypeptide: Ribosome maturation factor RimM (173 aa).

Residues 92-165 form the PRC barrel domain; the sequence is EGEFYHADLI…RVVIEMPGEI (74 aa).

Belongs to the RimM family. Binds ribosomal protein uS19.

It localises to the cytoplasm. In terms of biological role, an accessory protein needed during the final step in the assembly of 30S ribosomal subunit, possibly for assembly of the head region. Essential for efficient processing of 16S rRNA. May be needed both before and after RbfA during the maturation of 16S rRNA. It has affinity for free ribosomal 30S subunits but not for 70S ribosomes. The polypeptide is Ribosome maturation factor RimM (Nitrobacter hamburgensis (strain DSM 10229 / NCIMB 13809 / X14)).